The following is a 250-amino-acid chain: MKICLIDETGAGDGALSVLAARWGLEHDEDNLMALVLTPEHLELRKRDEPKLGGIFVDFVGGAMAHRRKFGGGRGEAVAKAVGIKGDYLPDVVDATAGLGRDAFVLASVGCRVRMLERNPVVAALLDDGLARGYADAEIGGWLQERLQLIHASSLTALSDITPRPQVVYLDPMFPHKQKSALVKKEMRVFQSLVGPDLDADGLLEPARLLATKRVVVKRPDYAPPLANVATPNAVVTKGHRFDIYAGTPV.

S-adenosyl-L-methionine contacts are provided by residues 101–102, 117–118, 153–154, and Asp171; these read RD, ER, and SS.

This sequence belongs to the methyltransferase superfamily. RsmJ family.

It is found in the cytoplasm. The enzyme catalyses guanosine(1516) in 16S rRNA + S-adenosyl-L-methionine = N(2)-methylguanosine(1516) in 16S rRNA + S-adenosyl-L-homocysteine + H(+). Functionally, specifically methylates the guanosine in position 1516 of 16S rRNA. The chain is Ribosomal RNA small subunit methyltransferase J from Escherichia coli O81 (strain ED1a).